The chain runs to 224 residues: Glutathione S-transferase U1 (224 aa).

One can recognise a GST N-terminal domain in the interval 6-85; sequence ESVKLLGFWA…YIDQTWKNSP (80 aa). Glutathione contacts are provided by residues 16-17, 42-43, 56-57, and 69-70; these read SP, NK, KV, and ES. Residues 90–217 enclose the GST C-terminal domain; it reads DPYEKAMARF…EKQIERMTKI (128 aa). Thr-151 carries the post-translational modification Phosphothreonine.

It belongs to the GST superfamily. Tau family.

The protein resides in the cytoplasm. It localises to the cytosol. The catalysed reaction is RX + glutathione = an S-substituted glutathione + a halide anion + H(+). Functionally, may be involved in the conjugation of reduced glutathione to a wide number of exogenous and endogenous hydrophobic electrophiles and have a detoxification role against certain herbicides. This Arabidopsis thaliana (Mouse-ear cress) protein is Glutathione S-transferase U1 (GSTU1).